The chain runs to 337 residues: Cytoskeleton protein RodZ (337 aa).

Over 1–111 (MNTEATHDQN…LGKRRKKRDG (111 aa)) the chain is Cytoplasmic. Positions 19–71 (LRNAREQLGLSQQAVAERLCLKVSTVRDIEEDKAPADLASTFLRGYIRSYARL) constitute an HTH cro/C1-type domain. Positions 30 to 49 (QQAVAERLCLKVSTVRDIEE) form a DNA-binding region, H-T-H motif. A helical; Signal-anchor for type II membrane protein membrane pass occupies residues 112 to 132 (WLMTFTWLVLFVVIGLSGAWW). The Periplasmic segment spans residues 133–337 (WQDHKAQQEE…TLNAEQSPAQ (205 aa)). Over residues 145 to 167 (TMADQSSAELSSNSEQGQSVPLN) the composition is skewed to polar residues. The tract at residues 145 to 220 (TMADQSSAEL…VSPSQANVDT (76 aa)) is disordered. A compositionally biased stretch (low complexity) spans 168–207 (TSTTTDPATTSTPPASVDTTATNTQTPAVTAPAPAVDPQQ). Over residues 208–218 (NAVVSPSQANV) the composition is skewed to polar residues.

The protein belongs to the RodZ family.

The protein resides in the cell inner membrane. Functionally, cytoskeletal protein that is involved in cell-shape control through regulation of the length of the long axis. This Escherichia coli O17:K52:H18 (strain UMN026 / ExPEC) protein is Cytoskeleton protein RodZ.